Reading from the N-terminus, the 200-residue chain is Large ribosomal subunit protein uL4 (200 aa).

The interval 43–67 (RAQKTRAEVSGSGKKPWRQKGTGRA) is disordered.

It belongs to the universal ribosomal protein uL4 family. As to quaternary structure, part of the 50S ribosomal subunit.

In terms of biological role, one of the primary rRNA binding proteins, this protein initially binds near the 5'-end of the 23S rRNA. It is important during the early stages of 50S assembly. It makes multiple contacts with different domains of the 23S rRNA in the assembled 50S subunit and ribosome. Forms part of the polypeptide exit tunnel. The protein is Large ribosomal subunit protein uL4 of Haemophilus influenzae (strain PittEE).